Consider the following 1173-residue polypeptide: Fas-binding factor 1 (1173 aa).

The disordered stretch occupies residues 17–168; sequence MALRTKKGLK…PSSSKTGLQY (152 aa). Positions 46–56 are enriched in basic and acidic residues; that stretch reads KPAEPASHAKD. Positions 80–93 are enriched in low complexity; that stretch reads AGADAEASSVSDAD. S172 is modified (phosphoserine). Disordered regions lie at residues 180–225 and 241–566; these read LAGL…GDTP and TTLG…SSRE. Positions 206–216 are enriched in low complexity; that stretch reads SPGAAAGQGPS. 2 stretches are compositionally biased toward basic and acidic residues: residues 247–258 and 287–299; these read DSPKAERKKTGD and TGER…DKKY. Polar residues-rich tracts occupy residues 331-345, 396-411, 468-477, and 533-544; these read VASS…QSVS, SPVQ…MTPS, VISQKKSQNL, and TGSSMSWSQATT. 3 coiled-coil regions span residues 617–742, 808–917, and 975–1057; these read TAQL…QQAS, QQRE…MNKC, and CELR…VQRQ. K1002 participates in a covalent cross-link: Glycyl lysine isopeptide (Lys-Gly) (interchain with G-Cter in SUMO2). Residues 1091 to 1124 form a disordered region; it reads ASLPGLPPRVQGPAASSRDAVQAPASSSPQCSQP. The segment covering 1110–1124 has biased composition (low complexity); that stretch reads AVQAPASSSPQCSQP.

Interacts with PARD3. May interact with FAS cytoplasmic domain. Interacts with TRAPPC14. As to expression, broadly expressed.

It localises to the cytoplasm. The protein localises to the cytoskeleton. It is found in the microtubule organizing center. Its subcellular location is the centrosome. The protein resides in the centriole. It localises to the spindle pole. The protein localises to the cell junction. Its function is as follows. Keratin-binding protein required for epithelial cell polarization. Involved in apical junction complex (AJC) assembly via its interaction with PARD3. Required for ciliogenesis. This is Fas-binding factor 1 (Fbf1) from Mus musculus (Mouse).